A 112-amino-acid chain; its full sequence is Tyrosine-protein phosphatase 7 (112 aa).

Positions 1-112 constitute a Tyrosine-protein phosphatase domain; sequence NNVTIIVMIT…SSPESGPIVV (112 aa). Asp-82 is a substrate binding site.

Belongs to the protein-tyrosine phosphatase family.

It catalyses the reaction O-phospho-L-tyrosyl-[protein] + H2O = L-tyrosyl-[protein] + phosphate. The sequence is that of Tyrosine-protein phosphatase 7 (STY-7) from Styela plicata (Wrinkled sea squirt).